Here is a 213-residue protein sequence, read N- to C-terminus: Uridine kinase (213 aa).

15 to 22 (GASASGKS) is an ATP binding site.

It belongs to the uridine kinase family.

It is found in the cytoplasm. The catalysed reaction is uridine + ATP = UMP + ADP + H(+). It carries out the reaction cytidine + ATP = CMP + ADP + H(+). The protein operates within pyrimidine metabolism; CTP biosynthesis via salvage pathway; CTP from cytidine: step 1/3. It participates in pyrimidine metabolism; UMP biosynthesis via salvage pathway; UMP from uridine: step 1/1. The protein is Uridine kinase of Pectobacterium carotovorum subsp. carotovorum (strain PC1).